The following is a 506-amino-acid chain: Cytochrome P450 71B8 (506 aa).

Residues 5–25 (ILLCFFFLFPLLLTLFKKLLP) form a helical membrane-spanning segment. Residue C443 participates in heme binding.

This sequence belongs to the cytochrome P450 family. Requires heme as cofactor.

It is found in the membrane. This chain is Cytochrome P450 71B8 (CYP71B8), found in Arabidopsis thaliana (Mouse-ear cress).